Reading from the N-terminus, the 419-residue chain is eIF5-mimic protein 1 (419 aa).

The segment at 1 to 22 (MNKHQKPVLTGQRFKTRKRDEK) is disordered. At lysine 117 the chain carries N6-acetyllysine. The W2 domain maps to 248–415 (VQQSLGTRKE…QNAEEESESE (168 aa)). Phosphoserine is present on residues serine 412 and serine 414.

This sequence belongs to the BZW family. In terms of assembly, interacts with EIF3E. Interacts with EIF2S2. Interacts with EIF3C.

The protein localises to the cytoplasm. Its function is as follows. Translation initiation regulator which represses non-AUG initiated translation and repeat-associated non-AUG (RAN) initiated translation by acting as a competitive inhibitor of eukaryotic translation initiation factor 5 (EIF5) function. Increases the accuracy of translation initiation by impeding EIF5-dependent translation from non-AUG codons by competing with it for interaction with EIF2S2 within the 43S pre-initiation complex (PIC) in an EIF3C-binding dependent manner. The sequence is that of eIF5-mimic protein 1 (BZW2) from Homo sapiens (Human).